The following is a 74-amino-acid chain: Capsid protein VP2 (74 aa).

Its subcellular location is the virion. Functionally, this extremely basic protein may tightly bind to SSV1 DNA. Essential for virus function. The sequence is that of Capsid protein VP2 (VP2) from Saccharolobus solfataricus (Sulfolobus solfataricus).